The primary structure comprises 105 residues: Prothymosin alpha-A (105 aa).

Over residues 1–30 (MADTKVDTSKEVSAKDLKEKKQVEEAENGK) the composition is skewed to basic and acidic residues. The interval 1-105 (MADTKVDTSK…VDPKKQKTDV (105 aa)) is disordered. Acidic residues-rich tracts occupy residues 39 to 78 (ENEE…EEAE) and 87 to 96 (EDDDDDEDDV).

Belongs to the pro/parathymosin family. In terms of tissue distribution, at the 20-somite stage (18 hpf), expressed on the dorsal side of the embryo in the developing central and peripheral nervous system (CNS and PNS), in the tail bud and the pronephric ducts. In the PNS, expressed in the otic vesicle, trigeminal ganglion and the anterior lateral line placode. Localized throughout the hindbrain, with highest expression in rhombomeres 3 and 4. In the head, expressed in the olfactory placode and in the diencephalic region. At the end of the segmentation period (20 hpf), expression begins in the newly forming endodermal pouches, and weakly in the pharyngeal arch precursor cells. During the early pharyngula period, expressed in the pectoral fin bud, the developing retina, and still present in the central nervous system and endodermal pouches. In the tail, expressed in the spinal cord and posterior lateral line precursors. Weakly expressed in the pronephric ducts, only in the corpuscles of Stanius. At 48 hpf, still expressed in the retina and brain, where expression is almost uniform. At this stage, expression is decreased in the spinal cord and is absent from the lateral line cells and pronephric ducts, but appears in the intestine and continues in the pharyngeal arches. In 72 hpf embryos, expression in the brain remains uniform but is restricted to amacrine cells in the retina. In the pharyngeal arches, expression continues to be limited to the ectodermal and endodermal covering cells.

The protein resides in the nucleus. In Danio rerio (Zebrafish), this protein is Prothymosin alpha-A (ptmaa).